Reading from the N-terminus, the 732-residue chain is Acetophenone carboxylase gamma subunit (732 aa).

It belongs to the HyuA family. Acetophenone carboxylase consists of five subunits; a heterooctameric subcomplex of two alpha (Apc1), two beta (Apc2), two gamma (Apc3) and two delta (Apc4) subunits assembles with the epsilon (Apc5) subunit in an unknown stoichiometry. Mg(2+) is required as a cofactor. Mn(2+) serves as cofactor.

The protein localises to the cytoplasm. The enzyme catalyses acetophenone + hydrogencarbonate + 2 ATP + H2O = 3-oxo-3-phenylpropanoate + 2 ADP + 2 phosphate + 2 H(+). Inhibited by zinc ions, carbamoylphosphate and beta,gamma-imido-ATP. Catalyzes the carboxylation of acetophenone to form 3-oxo-3-phenylpropanoate (benzoylacetate) in the anaerobic catabolism of ethylbenzene. Also carboxylates propiophenone at the same rate and 4-acetyl-pyridine at lower rates. In Aromatoleum aromaticum (strain DSM 19018 / LMG 30748 / EbN1) (Azoarcus sp. (strain EbN1)), this protein is Acetophenone carboxylase gamma subunit (apc3).